A 396-amino-acid polypeptide reads, in one-letter code: Elongation factor Tu (396 aa).

The tr-type G domain occupies 10-206; the sequence is KPHCNIGTIG…AVDAYIPQPE (197 aa). Residues 19–26 are G1; that stretch reads GHVDHGKT. 19 to 26 contributes to the GTP binding site; sequence GHVDHGKT. T26 contacts Mg(2+). Residues 60-64 are G2; that stretch reads GITIS. Positions 81–84 are G3; it reads DCPG. Residues 81 to 85 and 136 to 139 each bind GTP; these read DCPGH and NKVD. A G4 region spans residues 136–139; the sequence is NKVD. The interval 174-176 is G5; it reads SAL.

The protein belongs to the TRAFAC class translation factor GTPase superfamily. Classic translation factor GTPase family. EF-Tu/EF-1A subfamily. As to quaternary structure, monomer.

The protein resides in the cytoplasm. The enzyme catalyses GTP + H2O = GDP + phosphate + H(+). GTP hydrolase that promotes the GTP-dependent binding of aminoacyl-tRNA to the A-site of ribosomes during protein biosynthesis. The chain is Elongation factor Tu from Granulibacter bethesdensis (strain ATCC BAA-1260 / CGDNIH1).